The following is a 422-amino-acid chain: UDP-N-acetylmuramoylalanine--D-glutamate ligase (422 aa).

Residue 102-108 (GTNGKTT) coordinates ATP.

This sequence belongs to the MurCDEF family.

The protein resides in the cytoplasm. The catalysed reaction is UDP-N-acetyl-alpha-D-muramoyl-L-alanine + D-glutamate + ATP = UDP-N-acetyl-alpha-D-muramoyl-L-alanyl-D-glutamate + ADP + phosphate + H(+). Its pathway is cell wall biogenesis; peptidoglycan biosynthesis. In terms of biological role, cell wall formation. Catalyzes the addition of glutamate to the nucleotide precursor UDP-N-acetylmuramoyl-L-alanine (UMA). The polypeptide is UDP-N-acetylmuramoylalanine--D-glutamate ligase (Helicobacter pylori (strain ATCC 700392 / 26695) (Campylobacter pylori)).